The following is a 331-amino-acid chain: 5'-AMP-activated protein kinase subunit gamma-1 (331 aa).

Polar residues predominate over residues 1 to 12; the sequence is METVISSDSSPA. A disordered region spans residues 1–26; it reads METVISSDSSPAVENEHPQETPESNN. CBS domains follow at residues 43–103, 125–187, and 198–260; these read PTSS…KSAL, SFKP…PKPE, and IGTY…NLDV. Residues R70, 85 to 90, V130, 151 to 152, and K170 each bind ADP; these read MLTITD and HR. AMP contacts are provided by residues R70, 85–90, V130, H151, 151–152, K170, T200, A205, 226–227, and 242–245; these read MLTITD, HR, SA, and SKFD. ATP is bound by residues R70, 85–90, V130, 151–152, R152, and K170; these read MLTITD and HR. Positions 138-159 match the AMPK pseudosubstrate motif; that stretch reads LFDAVSSLIRNKIHRLPVIDPE. 242-245 contacts ADP; it reads SKFD. ATP is bound at residue 242–245; the sequence is SKFD. Phosphoserine; by ULK1 is present on S261. T263 is modified (phosphothreonine; by ULK1). R269 lines the ADP pocket. R269 contributes to the AMP binding site. R269 contributes to the ATP binding site. S270 is subject to Phosphoserine; by ULK1. The region spanning 272 to 329 is the CBS 4 domain; that stretch reads YFEGVLKCYLHETLETIINRLVEAEVHRLVVVDENDVVKGIVSLSDILQALVLTGGEK. ADP contacts are provided by residues L277 and 298–299; that span reads HR. AMP contacts are provided by residues L277, H298, 298–299, and 314–317; these read HR and SLSD. ATP contacts are provided by residues L277 and 298 to 299; that span reads HR.

This sequence belongs to the 5'-AMP-activated protein kinase gamma subunit family. In terms of assembly, AMPK is a heterotrimer of an alpha catalytic subunit (PRKAA1 or PRKAA2), a beta (PRKAB1 or PRKAB2) and a gamma non-catalytic subunits (PRKAG1, PRKAG2 or PRKAG3). Interacts with FNIP1 and FNIP2. In terms of processing, phosphorylated by ULK1 and ULK2; leading to negatively regulate AMPK activity and suggesting the existence of a regulatory feedback loop between ULK1, ULK2 and AMPK. Glycosylated; O-GlcNAcylated by OGT, promoting the AMP-activated protein kinase (AMPK) activity.

Its function is as follows. AMP/ATP-binding subunit of AMP-activated protein kinase (AMPK), an energy sensor protein kinase that plays a key role in regulating cellular energy metabolism. In response to reduction of intracellular ATP levels, AMPK activates energy-producing pathways and inhibits energy-consuming processes: inhibits protein, carbohydrate and lipid biosynthesis, as well as cell growth and proliferation. AMPK acts via direct phosphorylation of metabolic enzymes, and by longer-term effects via phosphorylation of transcription regulators. Also acts as a regulator of cellular polarity by remodeling the actin cytoskeleton; probably by indirectly activating myosin. Gamma non-catalytic subunit mediates binding to AMP, ADP and ATP, leading to activate or inhibit AMPK: AMP-binding results in allosteric activation of alpha catalytic subunit (PRKAA1 or PRKAA2) both by inducing phosphorylation and preventing dephosphorylation of catalytic subunits. ADP also stimulates phosphorylation, without stimulating already phosphorylated catalytic subunit. ATP promotes dephosphorylation of catalytic subunit, rendering the AMPK enzyme inactive. This Homo sapiens (Human) protein is 5'-AMP-activated protein kinase subunit gamma-1 (PRKAG1).